Reading from the N-terminus, the 507-residue chain is Zinc finger protein Aiolos (507 aa).

The tract at residues Met1–Met85 is disordered. Residue Thr20 is modified to Phosphothreonine. Phosphoserine is present on residues Ser22 and Ser42. Basic and acidic residues-rich tracts occupy residues Lys33 to Pro46 and Asp56 to Met72. Glycyl lysine isopeptide (Lys-Gly) (interchain with G-Cter in SUMO2) cross-links involve residues Lys61, Lys73, and Lys100. 3 C2H2-type zinc fingers span residues Met117–His139, Phe145–His167, and Phe173–His195. The segment at Tyr201–Cys223 adopts a C2H2-type 4; atypical zinc-finger fold. Lys244 is covalently cross-linked (Glycyl lysine isopeptide (Lys-Gly) (interchain with G-Cter in SUMO2)). At Thr325 the chain carries Phosphothreonine. The disordered stretch occupies residues Leu370–Gln396. The residue at position 377 (Ser377) is a Phosphoserine. Residues Phe450–His472 form a C2H2-type 5 zinc finger. A mediates homodimerization and heterodimerization region spans residues Phe450 to His502. A C2H2-type 6; atypical zinc finger spans residues Phe478–His502.

Belongs to the Ikaros C2H2-type zinc-finger protein family. As to quaternary structure, homodimer. Heterodimer with other IKAROS family members. Interacts with IKZF4 and IKZF5. Interacts with HRAS. Interacts with FOXP3; this interaction may be required for silencing target genes and regulating the suppressive activity of FOXP3-positive regulatory T-cells (Treg). Interacts with BCL21L isoform Bcl-X(L); this interaction blocks the anti-apoptotic role of BCL21L. Associates with histone deacetylase complexes containing HDAC1, MTA2 and SIN3A. Interacts with IKZF1. In terms of tissue distribution, expression is restricted to lymphoid tissues. Expressed at highest levels in spleen and at lower levels in the thymus and bone marrow. First detected in more committed lymphoid progenitors and strongly up-regulated as these differentiate into pre-T and pre-B cell precursors.

It localises to the nucleus. Its subcellular location is the cytoplasm. In terms of biological role, transcription factor that plays an important role in the regulation of lymphocyte differentiation. Binds to GGGAA. Plays an essential role in regulation of B-cell differentiation, proliferation and maturation to an effector state. Involved in regulating BCL2 expression and controlling apoptosis in T-cells in an IL2-dependent manner. This is Zinc finger protein Aiolos (Ikzf3) from Mus musculus (Mouse).